Reading from the N-terminus, the 143-residue chain is Crossover junction endodeoxyribonuclease Hjc (143 aa).

Glutamate 12 is a Mg(2+) binding site. Serine 32 is a catalytic residue. Aspartate 42 and glutamate 55 together coordinate Mg(2+).

This sequence belongs to the Holliday junction resolvase Hjc family. In terms of assembly, homodimer. Mg(2+) is required as a cofactor.

The catalysed reaction is Endonucleolytic cleavage at a junction such as a reciprocal single-stranded crossover between two homologous DNA duplexes (Holliday junction).. Its function is as follows. A structure-specific endonuclease that resolves Holliday junction (HJ) intermediates during genetic recombination. Cleaves 4-way DNA junctions introducing paired nicks in opposing strands, leaving a 5'-terminal phosphate and a 3'-terminal hydroxyl group that are subsequently ligated to produce recombinant products. Hjc, Hjm (Hel308) and PINA coordinate HJ migration and cleavage of replication forks in a coordinated way. The chain is Crossover junction endodeoxyribonuclease Hjc from Saccharolobus islandicus (strain REY15A) (Sulfolobus islandicus).